The sequence spans 356 residues: MALVSGALSTNRLRNYCVFGAVQPFDNCRAYGSPCSPDSTNNDGWFICDYHSSIRFKIEKMVLPIPDAEGNIYNRTVGKSLVNHKTLGAARVLIPTRDNYKTVLNLNSMSLAEQLVTHMIYDNVEAQGAVCKALQHNENFQTETYRLAEDMFNRTSAILAMTNPRRYCSQVNSNYARIWTTDDVNVAGNVFESMPPFLKNLINVAVAPEQIMIDEKTLVIRNCPTCNIDDSGLVANVQLYNPVVPRYRSTFNENVLHVENVLKFKGNANALQKSLSRYEPYPIVVPLMLGTQTLNTSSAYKQFTVPTRDDFAALNQRTGAAAAAPPAPAAAPAGPRPAAELEYDETLDRFARWRAR.

Belongs to the baculoviridae p39 family.

It localises to the virion. This chain is Major capsid protein (P39), found in Lepidoptera (butterflies and moths).